The following is a 278-amino-acid chain: Purine nucleoside phosphorylase YlmD (278 aa).

Zn(2+) contacts are provided by H87, C132, and H149.

Belongs to the purine nucleoside phosphorylase YfiH/LACC1 family. As to quaternary structure, homodimer. Requires Cu(2+) as cofactor. Zn(2+) serves as cofactor.

It carries out the reaction adenosine + phosphate = alpha-D-ribose 1-phosphate + adenine. It catalyses the reaction S-methyl-5'-thioadenosine + phosphate = 5-(methylsulfanyl)-alpha-D-ribose 1-phosphate + adenine. The enzyme catalyses inosine + phosphate = alpha-D-ribose 1-phosphate + hypoxanthine. The catalysed reaction is adenosine + H2O + H(+) = inosine + NH4(+). Functionally, purine nucleoside enzyme that catalyzes the phosphorolysis of adenosine and inosine nucleosides, yielding D-ribose 1-phosphate and the respective free bases, adenine and hypoxanthine. Also catalyzes the phosphorolysis of S-methyl-5'-thioadenosine into adenine and S-methyl-5-thio-alpha-D-ribose 1-phosphate. Also has adenosine deaminase activity. The chain is Purine nucleoside phosphorylase YlmD (ylmD) from Bacillus subtilis (strain 168).